Consider the following 623-residue polypeptide: Xaa-Pro aminopeptidase 1 (623 aa).

Arg77 contributes to the a peptide binding site. Lys304 bears the N6-acetyllysine mark. Residue His395 participates in a peptide binding. Mn(2+) is bound by residues Asp415, Asp426, and His489. The a peptide site is built by His489, His498, and Glu523. Mn(2+) is bound by residues Glu523 and Glu537.

It belongs to the peptidase M24B family. As to quaternary structure, homodimer. The cofactor is Mn(2+). As to expression, expressed in all tissues tested, including pancreas, heart, muscle, kidney, liver, lung and brain. Highest levels in pancreas.

It localises to the cytoplasm. The protein resides in the cytosol. The enzyme catalyses Release of any N-terminal amino acid, including proline, that is linked to proline, even from a dipeptide or tripeptide.. With respect to regulation, inhibited by apstatin and the metal ion chelators EDTA and 1,10-phenanthroline. Partially inhibited by dithiothreitol. Not inhibited by enalaprilat or amastatin. Specifically inhibited by the pseudodipeptide CQ31. Inhibition by CQ31 indirectly activates the CARD8 inflammasome: dipeptide accumulation following PEPD inactivation weaky inhibit dipeptidyl peptidases DDP8 and DPP9, relieving DPP8- and/or DPP9-mediated inhibition of CARD8. Its function is as follows. Metalloaminopeptidase that catalyzes the removal of a penultimate prolyl residue from the N-termini of peptides, such as Arg-Pro-Pro. Contributes to the degradation of bradykinin. The sequence is that of Xaa-Pro aminopeptidase 1 from Homo sapiens (Human).